Reading from the N-terminus, the 319-residue chain is Olfactory receptor 10Q1 (319 aa).

Residues 1–29 lie on the Extracellular side of the membrane; the sequence is MPVGKLVFNQSEPTEFVFRAFTTATEFQV. The N-linked (GlcNAc...) asparagine glycan is linked to asparagine 9. Residues 30-50 traverse the membrane as a helical segment; that stretch reads LLFLLFLLLYLMILCGNTAII. Over 51–58 the chain is Cytoplasmic; the sequence is WVVCTHST. Residues 59–79 form a helical membrane-spanning segment; that stretch reads LRTPMYFFLSNLSFLELCYTT. Residues 80–103 are Extracellular-facing; that stretch reads VVVPLMLSNILGAQKPISLAGCGA. Cysteine 101 and cysteine 194 are oxidised to a cystine. Residues 104–124 traverse the membrane as a helical segment; the sequence is QMFFFVTLGSTDCFLLAIMAY. The Cytoplasmic portion of the chain corresponds to 125–143; that stretch reads DRYVAICHPLHYTLIMTRE. A helical transmembrane segment spans residues 144-164; sequence LCTQMLGGALGLALFPSLQLT. Residues 165–202 lie on the Extracellular side of the membrane; sequence ALIFTLPFCGHHQEINHFLCDVPPVLRLACADIRVHQA. A helical transmembrane segment spans residues 203 to 222; sequence VLYVVSILVLTIPFLLICVS. Residues 223–242 are Cytoplasmic-facing; the sequence is YVFITCAILSIRSAEGRRRA. The chain crosses the membrane as a helical span at residues 243–263; it reads FSTCSFHLTVVLLQYGCCSLV. Over 264–276 the chain is Extracellular; that stretch reads YLRPRSSTSEDED. The helical transmembrane segment at 277 to 297 threads the bilayer; sequence SQIALVYTFVTPLLNPLLYSL. The Cytoplasmic segment spans residues 298-319; that stretch reads RNKDVKGALRSAIIRKAASDAN.

The protein belongs to the G-protein coupled receptor 1 family.

Its subcellular location is the cell membrane. Its function is as follows. Odorant receptor. This Homo sapiens (Human) protein is Olfactory receptor 10Q1 (OR10Q1).